Consider the following 273-residue polypeptide: Hydroxyethylthiazole kinase (273 aa).

Residue M49 participates in substrate binding. ATP-binding residues include R125 and T171. A substrate-binding site is contributed by G198.

It belongs to the Thz kinase family. Mg(2+) serves as cofactor.

The catalysed reaction is 5-(2-hydroxyethyl)-4-methylthiazole + ATP = 4-methyl-5-(2-phosphooxyethyl)-thiazole + ADP + H(+). The protein operates within cofactor biosynthesis; thiamine diphosphate biosynthesis; 4-methyl-5-(2-phosphoethyl)-thiazole from 5-(2-hydroxyethyl)-4-methylthiazole: step 1/1. Its function is as follows. Catalyzes the phosphorylation of the hydroxyl group of 4-methyl-5-beta-hydroxyethylthiazole (THZ). This chain is Hydroxyethylthiazole kinase, found in Desulforudis audaxviator (strain MP104C).